The sequence spans 231 residues: Proteasome subunit alpha type-2 (231 aa).

The protein belongs to the peptidase T1A family. The 26S proteasome consists of a 20S proteasome core and two 19S regulatory subunits. The 20S proteasome core is composed of 28 subunits that are arranged in four stacked rings, resulting in a barrel-shaped structure. The two end rings are each formed by seven alpha subunits, and the two central rings are each formed by seven beta subunits. The catalytic chamber with the active sites is on the inside of the barrel.

The protein localises to the cytoplasm. It is found in the nucleus. Functionally, the proteasome is a multicatalytic proteinase complex which is characterized by its ability to cleave peptides with Arg, Phe, Tyr, Leu, and Glu adjacent to the leaving group at neutral or slightly basic pH. The proteasome has an ATP-dependent proteolytic activity. In Trypanosoma brucei brucei, this protein is Proteasome subunit alpha type-2.